The primary structure comprises 155 residues: uncharacterized protein (155 aa).

Disordered regions lie at residues 24–63 (RVGYKEGPTVETKKIQPQLPDEDGNHSDKEDEQPQVVVLK) and 80–155 (KAAK…DENE). Ser-50 is subject to Phosphoserine. Lys-108 carries the N6-acetyllysine modification. Over residues 128 to 147 (KQSSVRKNSQKQIKNSSLLS) the composition is skewed to polar residues. A phosphoserine mark is found at Ser-130, Ser-147, and Ser-150.

This is an uncharacterized protein from Mus musculus (Mouse).